The sequence spans 464 residues: ATP-dependent protease ATPase subunit HslU (464 aa).

ATP-binding positions include Val19, 61–66 (GVGKTE), Asp278, Glu342, and Arg414.

Belongs to the ClpX chaperone family. HslU subfamily. As to quaternary structure, a double ring-shaped homohexamer of HslV is capped on each side by a ring-shaped HslU homohexamer. The assembly of the HslU/HslV complex is dependent on binding of ATP.

The protein localises to the cytoplasm. In terms of biological role, ATPase subunit of a proteasome-like degradation complex; this subunit has chaperone activity. The binding of ATP and its subsequent hydrolysis by HslU are essential for unfolding of protein substrates subsequently hydrolyzed by HslV. HslU recognizes the N-terminal part of its protein substrates and unfolds these before they are guided to HslV for hydrolysis. In Halalkalibacterium halodurans (strain ATCC BAA-125 / DSM 18197 / FERM 7344 / JCM 9153 / C-125) (Bacillus halodurans), this protein is ATP-dependent protease ATPase subunit HslU.